Consider the following 119-residue polypeptide: Hydrogenase maturation factor HypA (119 aa).

Residue H2 participates in Ni(2+) binding. Zn(2+)-binding residues include C73, C76, C89, and C92.

The protein belongs to the HypA/HybF family.

Functionally, involved in the maturation of [NiFe] hydrogenases. Required for nickel insertion into the metal center of the hydrogenase. The protein is Hydrogenase maturation factor HypA of Dehalococcoides mccartyi (strain CBDB1).